Here is a 215-residue protein sequence, read N- to C-terminus: UPF0502 protein YceH (215 aa).

Residue Lys80 is modified to N6-acetyllysine.

It belongs to the UPF0502 family.

This Escherichia coli O45:K1 (strain S88 / ExPEC) protein is UPF0502 protein YceH.